Consider the following 312-residue polypeptide: tRNA uridine(34) hydroxylase (312 aa).

Positions 130 to 225 constitute a Rhodanese domain; it reads RGDEVVFFDG…YGEKFGNQGL (96 aa). C185 serves as the catalytic Cysteine persulfide intermediate.

The protein belongs to the TrhO family.

It catalyses the reaction uridine(34) in tRNA + AH2 + O2 = 5-hydroxyuridine(34) in tRNA + A + H2O. Its function is as follows. Catalyzes oxygen-dependent 5-hydroxyuridine (ho5U) modification at position 34 in tRNAs. This is tRNA uridine(34) hydroxylase from Corynebacterium efficiens (strain DSM 44549 / YS-314 / AJ 12310 / JCM 11189 / NBRC 100395).